Consider the following 428-residue polypeptide: Cell number regulator 13 (428 aa).

Basic and acidic residues predominate over residues 233–280 (PEKETNVKAPEKKGSNYSESKGETAKSFDDDDDYPKKQNGDYPKKQKD). Residues 233-290 (PEKETNVKAPEKKGSNYSESKGETAKSFDDDDDYPKKQNGDYPKKQKDTCSTQRCSSQ) form a disordered region. The span at 281 to 290 (TCSTQRCSSQ) shows a compositional bias: polar residues. Residues 354–370 (IMAYSLILSCCCYTCCV) traverse the membrane as a helical segment.

Expressed in roots, coleoptiles, leaves, stalks, apical meristems, immature ears, embryos, endosperm, pericarp, silks and tassel spikelets. Not detected in pollen.

Its subcellular location is the membrane. This chain is Cell number regulator 13 (CNR13), found in Zea mays (Maize).